The chain runs to 420 residues: MPNGSRCPDCGSSELVEDSHYSQSQLVCSDCGCVVTEGVLTTTFSDEGNFREVTYSRSTGENEQVSRCQQRDLRRVRDLCRILKLPLTFEDTAISYYQKAYQLSGIRAARLQKKEVLVGCCVLITCRQHNWPLTMGTICTLLYADLDLFSGTYMQMVKLLGLDVPSLCLADLVKSYCSSFKLFQASPSVPAKYVEDKDKMLSRTLLLVELADETWLVTGRHPLPIITAATFLAWQSLRPSDRLTCSLAQFCKLANVDLPYPAASRLQELLAVLLQMAGQLAWLQVLKLNKRSVVKHIGDLLQHRHMLVRTAFRDGTAEVETQQQQQQQQGQGQGQQDEVGDGPFDLPKRKRRASPTPLLPPCMLKPPKRTHTLPPESAVTGDEDISDSEIEQYLRTPQEVRDFERAQAASQAAMRVPNPP.

Residues 3-36 (NGSRCPDCGSSELVEDSHYSQSQLVCSDCGCVVT) form a TFIIB-type zinc finger. C7, C10, C28, and C31 together coordinate Zn(2+). Tandem repeats lie at residues 72 to 157 (DLRR…MQMV) and 173 to 249 (VKSY…SLAQ). Residues 108–114 (AARLQKK) form an interaction with target DNA region. Residues 316-387 (TAEVETQQQQ…AVTGDEDISD (72 aa)) are disordered. Residues 322–336 (QQQQQQQQGQGQGQQ) show a composition bias toward low complexity. Position 354 is a phosphoserine (S354). Residues 358 to 364 (LLPPCML) form a required for the formation of a ternary complex with DNA and TBP; not required for interaction with TBP in the absence of DNA region. Cysteine sulfenic acid (-SOH) is present on C362. Residues 366 to 420 (PPKRTHTLPPESAVTGDEDISDSEIEQYLRTPQEVRDFERAQAASQAAMRVPNPP) form a required for interaction with TBP and formation of a ternary complex with DNA and TBP region.

The protein belongs to the TFIIB family. As to quaternary structure, component of TFIIIB complexes. The TFIIIB complex has two activities, alpha and beta. The TFIIIB-alpha activity complex is composed of TBP, BDP1, and a complex containing both BRF2 and at least four stably associated proteins; this complex inhibits the transcription by pol III via its phosphorylation by CK2; YY1 facilitates the TFIIIB-alpha complex formation. Interacts with TBP; this interaction promotes recruitment of BRF2 to TATA box-containing promoters. Interacts with TBP and the BURE sequence (GC-rich sequence downstream from the TATA box) to form a strong ternary complex which is joined by BDP1; this ternary complex stimulates pol III transcription. Forms a trimeric complex composed of TBP, BRF2 and mini-SNAPc complex (SNAP43, SNAP50, and the N-terminal third of SNAP190) on the promoter. Assembly of the TBP-BRF2 complex is stimulated by SNAP190. Interacts with MAF1 and SNAPC4. In terms of processing, in response to oxidative stress, Cys-362 is reversibly oxidized to cysteine sulfenic acid. Oxidation of Cys-362 impairs formation of a ternary complex with TBP and DNA and down-regulates expression of target genes in response to oxidative stress.

The protein localises to the nucleus. Its function is as follows. General activator of RNA polymerase III transcription. Factor exclusively required for RNA polymerase III transcription of genes with promoter elements upstream of the initiation sites. Contributes to the regulation of gene expression; functions as activator in the absence of oxidative stress. Down-regulates expression of target genes in response to oxidative stress. Overexpression protects cells against apoptosis in response to oxidative stress. This chain is Transcription factor IIIB 50 kDa subunit (Brf2), found in Mus musculus (Mouse).